A 408-amino-acid chain; its full sequence is Beta-ureidopropionase (408 aa).

One can recognise a CN hydrolase domain in the interval 90 to 360 (VRVGLIQNSI…DGLLISDMDL (271 aa)). The active-site Proton acceptor is glutamate 137. The active-site Proton donor is lysine 212. The Nucleophile role is filled by cysteine 249.

This sequence belongs to the carbon-nitrogen hydrolase superfamily. BUP family. As to quaternary structure, homodimer, homotetramer, homooctamer; can also form higher homooligomers.

It is found in the cytoplasm. It carries out the reaction 3-(carbamoylamino)propanoate + H2O + 2 H(+) = beta-alanine + NH4(+) + CO2. It catalyses the reaction 3-(carbamoylamino)-2-methylpropanoate + H2O + 2 H(+) = (R)-3-amino-2-methylpropanoate + NH4(+) + CO2. It participates in amino-acid biosynthesis; beta-alanine biosynthesis. Its function is as follows. Catalyzes a late step in pyrimidine degradation. Converts N-carbamoyl-beta-aminoisobutyrate and N-carbamoyl-beta-alanine (3-ureidopropanoate) to, respectively, beta-aminoisobutyrate and beta-alanine, ammonia and carbon dioxide. Involved in the recycling of nitrogen from nucleobases to general nitrogen metabolism. This chain is Beta-ureidopropionase, found in Arabidopsis thaliana (Mouse-ear cress).